The primary structure comprises 127 residues: DNA-directed RNA polymerases I, II, and III subunit RPABC2 (127 aa).

Over residues 1–34 (MSDNEDNFDGDDFDDVEEDEGLDDLENAEEEGQE) the composition is skewed to acidic residues. Positions 1-53 (MSDNEDNFDGDDFDDVEEDEGLDDLENAEEEGQENVEILPSGERPQANQKRIT) are disordered. Serine 2 bears the N-acetylserine mark. The residue at position 2 (serine 2) is a Phosphoserine; by CK2.

It belongs to the archaeal Rpo6/eukaryotic RPB6 RNA polymerase subunit family. Component of the RNA polymerase I (Pol I), RNA polymerase II (Pol II) and RNA polymerase III (Pol III) complexes consisting of at least 13, 12 and 17 subunits, respectively. Pol I complex consists of a ten-subunit catalytic core composed of POLR1A/RPA1, POLR1B/RPA2, POLR1C/RPAC1, POLR1D/RPAC2, POLR1H/RPA12, POLR2E/RPABC1, POLR2F/RPABC2, POLR2H/RPABC3, POLR2K/RPABC4 and POLR2L/RPABC5; a mobile stalk subunit POLR1F/RPA43 protruding from the core and additional subunits homologous to general transcription factors POLR1E/RPA49 and POLR1G/RPA34. Part of Pol I pre-initiation complex (PIC), in which Pol I core assembles with RRN3 and promoter-bound UTBF and SL1/TIF-IB complex. Pol II complex contains a ten-subunit catalytic core composed of POLR2A/RPB1, POLR2B/RPB2, POLR2C/RPB3, POLR2I/RPB9, POLR2J/RPB11, POLR2E/RPABC1, POLR2F/RPABC2, POLR2H/RPABC3, POLR2K/RPABC4 and POLR2L/RPABC5 and a mobile stalk composed of two subunits POLR2D/RPB4 and POLR2G/RPB7. Part of Pol II(G) complex, in which Pol II core associates with an additional subunit POLR2M; unlike conventional Pol II, Pol II(G) functions as a transcriptional repressor. Part of TBP-based Pol II pre-initiation complex (PIC), in which Pol II core assembles with general transcription factors and other specific initiation factors including GTF2E1, GTF2E2, GTF2F1, GTF2F2, TCEA1, ERCC2, ERCC3, GTF2H2, GTF2H3, GTF2H4, GTF2H5, GTF2A1, GTF2A2, GTF2B and TBP; this large multi-subunit PIC complex mediates DNA unwinding and targets Pol II core to the transcription start site where the first phosphodiester bond forms. Pol III complex consists of a ten-subunit catalytic core composed of POLR3A/RPC1, POLR3B/RPC2, POLR1C/RPAC1, POLR1D/RPAC2, POLR3K/RPC10, POLR2E/RPABC1, POLR2F/RPABC2, POLR2H/RPABC3, POLR2K/RPABC4 and POLR2L/RPABC5; a mobile stalk composed of two subunits POLR3H/RPC8 and CRCP/RPC9, protruding from the core and functioning primarily in transcription initiation; and additional subunits homologous to general transcription factors of the RNA polymerase II machinery, POLR3C/RPC3-POLR3F/RPC6-POLR3G/RPC7 heterotrimer required for transcription initiation and POLR3D/RPC4-POLR3E/RPC5 heterodimer involved in both transcription initiation and termination.

It is found in the nucleus. It localises to the nucleolus. In terms of biological role, DNA-dependent RNA polymerase catalyzes the transcription of DNA into RNA using the four ribonucleoside triphosphates as substrates. Common component of RNA polymerases I, II, and III which synthesize ribosomal RNA precursors, mRNA precursors and many functional non-coding RNAs, and small RNAs, such as 5S rRNA and tRNAs, respectively. Pol II is the central component of the basal RNA polymerase II transcription machinery. Pols are composed of mobile elements that move relative to each other. In Pol II, POLR2F/RPABC2 is part of the clamp element and together with parts of POLR2A/RPB1 and POLR2B/RPB2 forms a pocket to which the POLR2D/RPB4-POLR2G/RPB7 subcomplex binds. The chain is DNA-directed RNA polymerases I, II, and III subunit RPABC2 from Mus musculus (Mouse).